We begin with the raw amino-acid sequence, 742 residues long: Condensin complex subunit 2 (742 aa).

Disordered stretches follow at residues 1–62 (MKRA…FNSS), 151–172 (QQTEEGEDAENDDEDLQKKKER), 452–473 (FNSSNTAESSDNVSRSLSSTER), and 564–604 (IQPH…PSSS). Residues 21 to 39 (ALEKKRAKENSRKQRELRR) show a composition bias toward basic and acidic residues. Residues 53–62 (LNNSSPFNSS) show a composition bias toward polar residues. Positions 154–165 (EEGEDAENDDED) are enriched in acidic residues. Polar residues-rich tracts occupy residues 452 to 470 (FNSSNTAESSDNVSRSLSS) and 592 to 604 (PKQTPLLTPPSSS).

It belongs to the CND2 (condensin subunit 2) family. Component of the condensin complex, which contains the cut14/smc2 and cut3/smc2 heterodimer, and three non SMC subunits that probably regulate the complex: cnd1, cnd2 and cnd3.

The protein localises to the nucleus. It is found in the cytoplasm. Its subcellular location is the chromosome. Functionally, regulatory subunit of the condensin complex, a complex required for conversion of interphase chromatin into mitotic-like condense chromosomes. The condensin complex probably introduces positive supercoils into relaxed DNA in the presence of type I topoisomerases and converts nicked DNA into positive knotted forms in the presence of type II topoisomerases. The condensin complex probably also plays a role during interphase in processes such as DNA repair. This chain is Condensin complex subunit 2 (cnd2), found in Schizosaccharomyces pombe (strain 972 / ATCC 24843) (Fission yeast).